We begin with the raw amino-acid sequence, 139 residues long: Cytochrome c2 (139 aa).

Positions 1–25 (MVKKLLTILSIAATAGSLSIGTASA) are cleaved as a signal peptide. Residue Q26 is modified to Pyrrolidone carboxylic acid. Positions 38, 41, 42, and 118 each coordinate heme c.

It belongs to the cytochrome c family. Post-translationally, binds 1 heme c group covalently per subunit.

Cytochrome c2 is found mainly in purple, non-sulfur, photosynthetic bacteria where it functions as the electron donor to the oxidized bacteriochlorophyll in the photophosphorylation pathway. However, it may also have a role in the respiratory chain and is found in some non-photosynthetic bacteria. The chain is Cytochrome c2 (cycA) from Rhodopseudomonas palustris (strain ATCC BAA-98 / CGA009).